Reading from the N-terminus, the 307-residue chain is UDP-3-O-acyl-N-acetylglucosamine deacetylase (307 aa).

Residues histidine 78, histidine 241, and aspartate 245 each coordinate Zn(2+). Histidine 268 (proton donor) is an active-site residue.

This sequence belongs to the LpxC family. Requires Zn(2+) as cofactor.

It carries out the reaction a UDP-3-O-[(3R)-3-hydroxyacyl]-N-acetyl-alpha-D-glucosamine + H2O = a UDP-3-O-[(3R)-3-hydroxyacyl]-alpha-D-glucosamine + acetate. The protein operates within glycolipid biosynthesis; lipid IV(A) biosynthesis; lipid IV(A) from (3R)-3-hydroxytetradecanoyl-[acyl-carrier-protein] and UDP-N-acetyl-alpha-D-glucosamine: step 2/6. Catalyzes the hydrolysis of UDP-3-O-myristoyl-N-acetylglucosamine to form UDP-3-O-myristoylglucosamine and acetate, the committed step in lipid A biosynthesis. The sequence is that of UDP-3-O-acyl-N-acetylglucosamine deacetylase from Acidovorax sp. (strain JS42).